Reading from the N-terminus, the 763-residue chain is DNA polymerase 3 (763 aa).

This sequence belongs to the DNA polymerase type-B family.

It catalyses the reaction DNA(n) + a 2'-deoxyribonucleoside 5'-triphosphate = DNA(n+1) + diphosphate. The sequence is that of DNA polymerase 3 (dpo3) from Saccharolobus shibatae (strain ATCC 51178 / DSM 5389 / JCM 8931 / NBRC 15437 / B12) (Sulfolobus shibatae).